A 51-amino-acid chain; its full sequence is Micropeptide inhibiting actin cytoskeleton (51 aa).

The interval 1–22 (MERAGVPGFSPRRSSVEAKMQS) is disordered.

As to quaternary structure, interacts with aquaporin AQP2.

In terms of biological role, reduces filamentous actin fibers by interacting with aquaporin AQP2 which leads to inhibition of the expression of SEPTIN4 and integrin ITGB4. Also inhibits the activation of the EREG/EGFR signaling pathway through interaction with AQP2. This chain is Micropeptide inhibiting actin cytoskeleton, found in Homo sapiens (Human).